Here is a 224-residue protein sequence, read N- to C-terminus: Orotidine 5'-phosphate decarboxylase (224 aa).

Substrate is bound by residues aspartate 10, lysine 32, 59–68, threonine 115, arginine 175, glutamine 184, glycine 204, and arginine 205; that span reads DLKLHDIPNT. Lysine 61 acts as the Proton donor in catalysis.

This sequence belongs to the OMP decarboxylase family. Type 1 subfamily. As to quaternary structure, homodimer.

It catalyses the reaction orotidine 5'-phosphate + H(+) = UMP + CO2. The protein operates within pyrimidine metabolism; UMP biosynthesis via de novo pathway; UMP from orotate: step 2/2. Catalyzes the decarboxylation of orotidine 5'-monophosphate (OMP) to uridine 5'-monophosphate (UMP). The chain is Orotidine 5'-phosphate decarboxylase from Sphingopyxis alaskensis (strain DSM 13593 / LMG 18877 / RB2256) (Sphingomonas alaskensis).